Here is a 274-residue protein sequence, read N- to C-terminus: NH(3)-dependent NAD(+) synthetase (274 aa).

Residue 46–53 participates in ATP binding; sequence GISGGQDS. A Mg(2+)-binding site is contributed by aspartate 52. Arginine 140 serves as a coordination point for deamido-NAD(+). Threonine 160 is a binding site for ATP. Position 165 (glutamate 165) interacts with Mg(2+). Deamido-NAD(+) is bound by residues lysine 173 and aspartate 180. ATP contacts are provided by lysine 189 and threonine 211. 260–261 is a binding site for deamido-NAD(+); that stretch reads HK.

This sequence belongs to the NAD synthetase family. As to quaternary structure, homodimer.

The catalysed reaction is deamido-NAD(+) + NH4(+) + ATP = AMP + diphosphate + NAD(+) + H(+). It functions in the pathway cofactor biosynthesis; NAD(+) biosynthesis; NAD(+) from deamido-NAD(+) (ammonia route): step 1/1. In terms of biological role, catalyzes the ATP-dependent amidation of deamido-NAD to form NAD. Uses ammonia as a nitrogen source. In Streptococcus equi subsp. zooepidemicus (strain H70), this protein is NH(3)-dependent NAD(+) synthetase.